The chain runs to 257 residues: Hydroxyacylglutathione hydrolase (257 aa).

Zn(2+) contacts are provided by His-54, His-56, Asp-58, His-59, His-113, Asp-137, and His-175.

The protein belongs to the metallo-beta-lactamase superfamily. Glyoxalase II family. In terms of assembly, monomer. It depends on Zn(2+) as a cofactor.

The catalysed reaction is an S-(2-hydroxyacyl)glutathione + H2O = a 2-hydroxy carboxylate + glutathione + H(+). It functions in the pathway secondary metabolite metabolism; methylglyoxal degradation; (R)-lactate from methylglyoxal: step 2/2. Functionally, thiolesterase that catalyzes the hydrolysis of S-D-lactoyl-glutathione to form glutathione and D-lactic acid. The sequence is that of Hydroxyacylglutathione hydrolase from Trichormus variabilis (strain ATCC 29413 / PCC 7937) (Anabaena variabilis).